Reading from the N-terminus, the 369-residue chain is Putative F-box/kelch-repeat protein At4g39760 (369 aa).

Positions 14–60 constitute an F-box domain; the sequence is SLSFSSLPHEIVVSCLARVSGSYYPKLCLVSKQFRSIILSNEIYKAR. 3 Kelch repeats span residues 131–177, 178–224, and 228–274; these read ETYI…GQYP, NIYV…KMKM, and NVYV…KNCW.

This is Putative F-box/kelch-repeat protein At4g39760 from Arabidopsis thaliana (Mouse-ear cress).